Here is a 157-residue protein sequence, read N- to C-terminus: MIVLGIDPALGSLGWAVVAKESAKLKYLASGVIKTSSKDEIHHRLSYINSILEKVILEYKPNMATIEETFVNTNSVTSLKLGYARGAIMSLIGRYDLDMREFKPNTIKKTVTGYGHAEKDQILHMIKLLLPGTAAITNSDEADAVAIAYTCLVTKNY.

Catalysis depends on residues aspartate 7, glutamate 67, and aspartate 140. Residues aspartate 7, glutamate 67, and aspartate 140 each coordinate Mg(2+).

Belongs to the RuvC family. As to quaternary structure, homodimer which binds Holliday junction (HJ) DNA. The HJ becomes 2-fold symmetrical on binding to RuvC with unstacked arms; it has a different conformation from HJ DNA in complex with RuvA. In the full resolvosome a probable DNA-RuvA(4)-RuvB(12)-RuvC(2) complex forms which resolves the HJ. Requires Mg(2+) as cofactor.

The protein localises to the cytoplasm. The catalysed reaction is Endonucleolytic cleavage at a junction such as a reciprocal single-stranded crossover between two homologous DNA duplexes (Holliday junction).. Its function is as follows. The RuvA-RuvB-RuvC complex processes Holliday junction (HJ) DNA during genetic recombination and DNA repair. Endonuclease that resolves HJ intermediates. Cleaves cruciform DNA by making single-stranded nicks across the HJ at symmetrical positions within the homologous arms, yielding a 5'-phosphate and a 3'-hydroxyl group; requires a central core of homology in the junction. The consensus cleavage sequence is 5'-(A/T)TT(C/G)-3'. Cleavage occurs on the 3'-side of the TT dinucleotide at the point of strand exchange. HJ branch migration catalyzed by RuvA-RuvB allows RuvC to scan DNA until it finds its consensus sequence, where it cleaves and resolves the cruciform DNA. This Rickettsia bellii (strain OSU 85-389) protein is Crossover junction endodeoxyribonuclease RuvC.